A 116-amino-acid polypeptide reads, in one-letter code: Mercuric transport protein MerT (116 aa).

Transmembrane regions (helical) follow at residues 16–36 and 46–66; these read LAAILASACCLGPLVLIALGF and VLEPYRPIFIGVALVALFFAW. Positions 24 and 25 each coordinate Hg(2+). 2 residues coordinate Hg(2+): C76 and C82. A helical membrane pass occupies residues 94–114; it reads IFWGVAVLVLVALGFPYVVPF.

This sequence belongs to the MerT family.

Its subcellular location is the cell inner membrane. In terms of biological role, involved in mercury resistance. Probably transfers a mercuric ion from the periplasmic Hg(2+)-binding protein MerP to the cytoplasmic mercuric reductase MerA. This Pseudomonas fluorescens protein is Mercuric transport protein MerT.